The primary structure comprises 652 residues: Acetyl-coenzyme A synthetase (652 aa).

CoA-binding positions include 191–194 (RAGR), Thr311, and Asn335. ATP contacts are provided by residues 387–389 (GEP), 411–416 (DTWWQT), Asp500, and Arg515. Ser523 is a CoA binding site. Position 526 (Arg526) interacts with ATP. Mg(2+) contacts are provided by Val537, His539, and Ile542. Arg584 is a CoA binding site. Lys609 bears the N6-acetyllysine mark.

The protein belongs to the ATP-dependent AMP-binding enzyme family. It depends on Mg(2+) as a cofactor. Post-translationally, acetylated. Deacetylation by the SIR2-homolog deacetylase activates the enzyme.

It catalyses the reaction acetate + ATP + CoA = acetyl-CoA + AMP + diphosphate. Its function is as follows. Catalyzes the conversion of acetate into acetyl-CoA (AcCoA), an essential intermediate at the junction of anabolic and catabolic pathways. Acs undergoes a two-step reaction. In the first half reaction, Acs combines acetate with ATP to form acetyl-adenylate (AcAMP) intermediate. In the second half reaction, it can then transfer the acetyl group from AcAMP to the sulfhydryl group of CoA, forming the product AcCoA. Enables the cell to use acetate during aerobic growth to generate energy via the TCA cycle, and biosynthetic compounds via the glyoxylate shunt. Acetylates CheY, the response regulator involved in flagellar movement and chemotaxis. In Salmonella typhi, this protein is Acetyl-coenzyme A synthetase.